The chain runs to 149 residues: MQVILLDKVANLGSLGDQVNVKAGYARNFLVPQGKAVPATKKNVEFFEARRAELEAKLADVLAAAEARAEQINALESVTIASKAGDEGKLFGSIGTRDIADAVTAAGVKVAKSEVRLPNGVLRNVGEHEVNFQVHSEVFAKVIINVVAE.

Belongs to the bacterial ribosomal protein bL9 family.

Binds to the 23S rRNA. The polypeptide is Large ribosomal subunit protein bL9 (Klebsiella pneumoniae subsp. pneumoniae (strain ATCC 700721 / MGH 78578)).